Reading from the N-terminus, the 121-residue chain is MARVAGVDIPRDKRVVISLTYVFGIGKSTAAKILETAGVDENTRVRDLTEEELGRIREAVEGYQVEGDLRREVSLNIKRLIEIGSYRGIRHRRGLPVRGQNSKNNARTRKGPKRTVANKKK.

The tract at residues 92-121 is disordered; the sequence is RRGLPVRGQNSKNNARTRKGPKRTVANKKK. A compositionally biased stretch (basic residues) spans 106-121; the sequence is ARTRKGPKRTVANKKK.

It belongs to the universal ribosomal protein uS13 family. As to quaternary structure, part of the 30S ribosomal subunit. Forms a loose heterodimer with protein S19. Forms two bridges to the 50S subunit in the 70S ribosome.

Functionally, located at the top of the head of the 30S subunit, it contacts several helices of the 16S rRNA. In the 70S ribosome it contacts the 23S rRNA (bridge B1a) and protein L5 of the 50S subunit (bridge B1b), connecting the 2 subunits; these bridges are implicated in subunit movement. Contacts the tRNAs in the A and P-sites. This chain is Small ribosomal subunit protein uS13, found in Shouchella clausii (strain KSM-K16) (Alkalihalobacillus clausii).